We begin with the raw amino-acid sequence, 33 residues long: Mu-theraphotoxin-Osp1b (33 aa).

3 disulfide bridges follow: Cys-2-Cys-17, Cys-9-Cys-22, and Cys-16-Cys-29.

The protein belongs to the neurotoxin 10 (Hwtx-1) family. 22 (Htx-4) subfamily. In terms of tissue distribution, expressed by the venom gland.

It is found in the secreted. Its function is as follows. Voltage-gated sodium channel Nav1.7/SCN9A inhibitor. This chain is Mu-theraphotoxin-Osp1b, found in Orphnaecus sp. (strain Maanghit-Cave/Philippines) (Tarantula spider).